The primary structure comprises 309 residues: Malate dehydrogenase (309 aa).

NAD(+) is bound by residues 10–15 (GAGNVG) and Asp-34. Residues Arg-83 and Arg-89 each contribute to the substrate site. NAD(+)-binding positions include Asn-96 and 119–121 (VTN). Asn-121 and Arg-152 together coordinate substrate. The active-site Proton acceptor is His-176.

It belongs to the LDH/MDH superfamily. MDH type 3 family.

The enzyme catalyses (S)-malate + NAD(+) = oxaloacetate + NADH + H(+). Functionally, catalyzes the reversible oxidation of malate to oxaloacetate. The polypeptide is Malate dehydrogenase (Desulforudis audaxviator (strain MP104C)).